The following is a 364-amino-acid chain: Chorismate synthase (364 aa).

Arg48 and Arg54 together coordinate NADP(+). FMN-binding positions include 125–127 (RSS), 238–239 (NA), Gly278, 293–297 (KPTSS), and Arg319.

The protein belongs to the chorismate synthase family. In terms of assembly, homotetramer. The cofactor is FMNH2.

The catalysed reaction is 5-O-(1-carboxyvinyl)-3-phosphoshikimate = chorismate + phosphate. It participates in metabolic intermediate biosynthesis; chorismate biosynthesis; chorismate from D-erythrose 4-phosphate and phosphoenolpyruvate: step 7/7. Catalyzes the anti-1,4-elimination of the C-3 phosphate and the C-6 proR hydrogen from 5-enolpyruvylshikimate-3-phosphate (EPSP) to yield chorismate, which is the branch point compound that serves as the starting substrate for the three terminal pathways of aromatic amino acid biosynthesis. This reaction introduces a second double bond into the aromatic ring system. In Shewanella loihica (strain ATCC BAA-1088 / PV-4), this protein is Chorismate synthase.